The chain runs to 369 residues: Opsin Rh6 (369 aa).

Residues 1–46 (MASLHPPSFAYMRDGRNLSLAESVPAEIMHMVDPYWYQWPPLEPMW) lie on the Extracellular side of the membrane. A glycan (N-linked (GlcNAc...) asparagine) is linked at asparagine 17. The chain crosses the membrane as a helical span at residues 47 to 71 (FGIIGFVIAILGTMSLAGNFIVMYI). At 72 to 83 (FTSSKGLRTPSN) the chain is on the cytoplasmic side. The helical transmembrane segment at 84–109 (MFVVNLAFSDFMMMFTMFPPVVLNGF) threads the bilayer. The Extracellular portion of the chain corresponds to 110–123 (YGTWIMGPFLCELY). A disulfide bridge links cysteine 120 with cysteine 197. A helical membrane pass occupies residues 124–143 (GMFGSLFGCVSIWSMTLIAY). Residues 144–162 (DRYCVIVKGMARKPLTATA) are Cytoplasmic-facing. The helical transmembrane segment at 163 to 186 (AVLRLMVVWTICGAWALMPLFGWN) threads the bilayer. Topologically, residues 187-210 (RYVPEGNMTACGTDYFAKDWWNRS) are extracellular. N-linked (GlcNAc...) asparagine glycans are attached at residues asparagine 193 and asparagine 208. Residues 211-238 (YIIVYSLWVYLTPLLTIIFSYWHIMKAV) form a helical membrane-spanning segment. At 239 to 274 (AAHEKAMREQAKKMNVASLRNSEADKSKAIEIKLAK) the chain is on the cytoplasmic side. A helical membrane pass occupies residues 275-298 (VALTTISLWFFAWTPYTIINYAGI). The Extracellular portion of the chain corresponds to 299-305 (FESMHLS). Residues 306 to 330 (PLSTICGSVFAKANAVCNPIVYGLS) form a helical membrane-spanning segment. Lysine 317 bears the N6-(retinylidene)lysine mark. Residues 331-369 (HPKYKQVLREKMPCLACGKDDLTSDSRTQATAEISESQA) lie on the Cytoplasmic side of the membrane.

The protein belongs to the G-protein coupled receptor 1 family. Opsin subfamily. Post-translationally, phosphorylated on some or all of the serine and threonine residues present in the C-terminal region. Each Drosophila eye is composed of 800 facets or ommatidia. Each ommatidium contains 8 photoreceptor cells (R1-R8), the R1 to R6 cells are outer cells, while R7 and R8 are inner cells. Rh6 is expressed in a subset of R8 cells, most likely expressed in the subset of R8 cells paired with Rh4-expressing R7 cells (R7y).

It localises to the membrane. Visual pigments are the light-absorbing molecules that mediate vision. They consist of an apoprotein, opsin, covalently linked to cis-retinal. The chain is Opsin Rh6 (Rh6) from Drosophila melanogaster (Fruit fly).